Here is a 183-residue protein sequence, read N- to C-terminus: MQPYIELVRRYVYRRILIEFGDDELGKLAVAIFNTLLSRGEAMTDDKLTSIVGYNAIDVRRILQALYNMRLASVVEEFNEAAGRIEQSWSIKDEDIRRFLINLIGGVLDKVGVLMQQLTNTPIYICPKCFKRYSEDDALMYDYKCPLDRTPLEYINPADYLTVLGAVEARLKKMMESVSKGSV.

The region spanning 4 to 97 (YIELVRRYVY…SWSIKDEDIR (94 aa)) is the HTH TFE/IIEalpha-type domain.

It belongs to the TFE family. Monomer. Interaction with RNA polymerase subunits RpoF and RpoE is necessary for Tfe stimulatory transcription activity. Able to interact with Tbp and RNA polymerase in the absence of DNA promoter. Interacts both with the preinitiation and elongation complexes.

In terms of biological role, transcription factor that plays a role in the activation of archaeal genes transcribed by RNA polymerase. Facilitates transcription initiation by enhancing TATA-box recognition by TATA-box-binding protein (Tbp), and transcription factor B (Tfb) and RNA polymerase recruitment. Not absolutely required for transcription in vitro, but particularly important in cases where Tbp or Tfb function is not optimal. It dynamically alters the nucleic acid-binding properties of RNA polymerases by stabilizing the initiation complex and destabilizing elongation complexes. Seems to translocate with the RNA polymerase following initiation and acts by binding to the non template strand of the transcription bubble in elongation complexes. This chain is Transcription factor E, found in Caldivirga maquilingensis (strain ATCC 700844 / DSM 13496 / JCM 10307 / IC-167).